A 380-amino-acid polypeptide reads, in one-letter code: PqqA peptide cyclase (380 aa).

In terms of domain architecture, Radical SAM core spans Val8 to Ala223. Positions 22, 26, and 29 each coordinate [4Fe-4S] cluster.

Belongs to the radical SAM superfamily. PqqE family. In terms of assembly, interacts with PqqD. The interaction is necessary for activity of PqqE. [4Fe-4S] cluster serves as cofactor.

It catalyses the reaction [PQQ precursor protein] + S-adenosyl-L-methionine = E-Y cross-linked-[PQQ precursor protein] + 5'-deoxyadenosine + L-methionine + H(+). It participates in cofactor biosynthesis; pyrroloquinoline quinone biosynthesis. In terms of biological role, catalyzes the cross-linking of a glutamate residue and a tyrosine residue in the PqqA protein as part of the biosynthesis of pyrroloquinoline quinone (PQQ). The sequence is that of PqqA peptide cyclase from Klebsiella pneumoniae (strain 342).